The following is a 430-amino-acid chain: Phosphomethylpyrimidine synthase (430 aa).

Substrate contacts are provided by residues Asn67, Met96, Tyr125, His161, 183–185 (SRG), 224–227 (DALR), and Glu263. His267 lines the Zn(2+) pocket. Tyr290 is a substrate binding site. His331 contributes to the Zn(2+) binding site. [4Fe-4S] cluster is bound by residues Cys406, Cys409, and Cys413.

It belongs to the ThiC family. In terms of assembly, homodimer. [4Fe-4S] cluster is required as a cofactor.

The enzyme catalyses 5-amino-1-(5-phospho-beta-D-ribosyl)imidazole + S-adenosyl-L-methionine = 4-amino-2-methyl-5-(phosphooxymethyl)pyrimidine + CO + 5'-deoxyadenosine + formate + L-methionine + 3 H(+). It participates in cofactor biosynthesis; thiamine diphosphate biosynthesis. In terms of biological role, catalyzes the synthesis of the hydroxymethylpyrimidine phosphate (HMP-P) moiety of thiamine from aminoimidazole ribotide (AIR) in a radical S-adenosyl-L-methionine (SAM)-dependent reaction. This Campylobacter jejuni subsp. doylei (strain ATCC BAA-1458 / RM4099 / 269.97) protein is Phosphomethylpyrimidine synthase.